Consider the following 38-residue polypeptide: Bacteriocin curvaticin FS47 (38 aa).

It localises to the secreted. Functionally, bacteriocin active against Listeria monocytogenes, Pediococcus, Enterococcus, Lactobacilli and Bacilli. This is Bacteriocin curvaticin FS47 from Latilactobacillus curvatus (Lactobacillus curvatus).